A 224-amino-acid polypeptide reads, in one-letter code: Menaquinol:cytochrome c reductase cytochrome b subunit (224 aa).

Residues 37–57 (FSAFVYCFGGLTFFVTVIQIL) form a helical membrane-spanning segment. Tyrosine 42 contacts heme b. Cysteine 43 contacts heme c. Residues arginine 91, histidine 94, histidine 108, and arginine 111 each contribute to the heme b site. 3 helical membrane passes run 96-116 (WGAS…FFQG), 126-146 (WIVG…GYLL), and 195-215 (IHVF…FLMI). Positions 196 and 211 each coordinate heme b. Residues arginine 216 and isoleucine 220 each coordinate heme c. Serine 221 lines the heme b pocket.

Belongs to the cytochrome b family. As to quaternary structure, the main subunits of the menaquinol:cytochrome c complex are a Rieske-type iron-sulfur protein (QcrA), a cytochrome b (QcrB) and a cytochrome c (QcrC). The cofactor is heme b. Requires heme c as cofactor.

It is found in the cell membrane. In terms of biological role, component of the menaquinol:cytochrome c reductase complex. The chain is Menaquinol:cytochrome c reductase cytochrome b subunit (qcrB) from Geobacillus thermodenitrificans.